The chain runs to 452 residues: Bifunctional protein GlmU (452 aa).

The segment at 1–226 (MAFSVVVLAA…AVEVEGVNNR (226 aa)) is pyrophosphorylase. Residues 8–11 (LAAG), Lys-22, Gln-73, and 78–79 (GT) each bind UDP-N-acetyl-alpha-D-glucosamine. Residue Asp-102 coordinates Mg(2+). Gly-137, Glu-151, Asn-166, and Asn-224 together coordinate UDP-N-acetyl-alpha-D-glucosamine. Asn-224 lines the Mg(2+) pocket. Residues 227 to 247 (LQLANLERALQNRQADELMTN) are linker. The N-acetyltransferase stretch occupies residues 248–452 (GVTLLDPSRF…IPNWPRPTKK (205 aa)). The UDP-N-acetyl-alpha-D-glucosamine site is built by Arg-330 and Lys-348. His-360 acts as the Proton acceptor in catalysis. Positions 363 and 374 each coordinate UDP-N-acetyl-alpha-D-glucosamine. Residues Ala-377, 383–384 (NY), Ser-402, Ala-420, and Arg-437 each bind acetyl-CoA.

This sequence in the N-terminal section; belongs to the N-acetylglucosamine-1-phosphate uridyltransferase family. In the C-terminal section; belongs to the transferase hexapeptide repeat family. In terms of assembly, homotrimer. It depends on Mg(2+) as a cofactor.

It localises to the cytoplasm. It carries out the reaction alpha-D-glucosamine 1-phosphate + acetyl-CoA = N-acetyl-alpha-D-glucosamine 1-phosphate + CoA + H(+). It catalyses the reaction N-acetyl-alpha-D-glucosamine 1-phosphate + UTP + H(+) = UDP-N-acetyl-alpha-D-glucosamine + diphosphate. Its pathway is nucleotide-sugar biosynthesis; UDP-N-acetyl-alpha-D-glucosamine biosynthesis; N-acetyl-alpha-D-glucosamine 1-phosphate from alpha-D-glucosamine 6-phosphate (route II): step 2/2. It participates in nucleotide-sugar biosynthesis; UDP-N-acetyl-alpha-D-glucosamine biosynthesis; UDP-N-acetyl-alpha-D-glucosamine from N-acetyl-alpha-D-glucosamine 1-phosphate: step 1/1. It functions in the pathway bacterial outer membrane biogenesis; LPS lipid A biosynthesis. Catalyzes the last two sequential reactions in the de novo biosynthetic pathway for UDP-N-acetylglucosamine (UDP-GlcNAc). The C-terminal domain catalyzes the transfer of acetyl group from acetyl coenzyme A to glucosamine-1-phosphate (GlcN-1-P) to produce N-acetylglucosamine-1-phosphate (GlcNAc-1-P), which is converted into UDP-GlcNAc by the transfer of uridine 5-monophosphate (from uridine 5-triphosphate), a reaction catalyzed by the N-terminal domain. The sequence is that of Bifunctional protein GlmU from Alteromonas mediterranea (strain DSM 17117 / CIP 110805 / LMG 28347 / Deep ecotype).